We begin with the raw amino-acid sequence, 477 residues long: Glycogen synthase (477 aa).

Lysine 15 serves as a coordination point for ADP-alpha-D-glucose.

Belongs to the glycosyltransferase 1 family. Bacterial/plant glycogen synthase subfamily.

It catalyses the reaction [(1-&gt;4)-alpha-D-glucosyl](n) + ADP-alpha-D-glucose = [(1-&gt;4)-alpha-D-glucosyl](n+1) + ADP + H(+). The protein operates within glycan biosynthesis; glycogen biosynthesis. Synthesizes alpha-1,4-glucan chains using ADP-glucose. The polypeptide is Glycogen synthase (Klebsiella pneumoniae subsp. pneumoniae (strain ATCC 700721 / MGH 78578)).